A 1385-amino-acid polypeptide reads, in one-letter code: Formin-like protein 7 (1385 aa).

Residues 9 to 193 (FKKPPDGLLL…RYVSMRNVVP (185 aa)) enclose the Phosphatase tensin-type domain. The active-site Phosphocysteine intermediate is C126. One can recognise a C2 tensin-type domain in the interval 199 to 358 (DRALTLDSVI…KASSTSQGNI (160 aa)). 4 disordered regions span residues 345 to 367 (IPQR…DGSE), 427 to 510 (APSR…LTVN), 649 to 989 (STAA…PLHW), and 1362 to 1385 (KRAQ…LLEP). Polar residues-rich tracts occupy residues 349–358 (KASSTSQGNI), 448–470 (TSAS…SPVQ), and 483–510 (PAQS…LTVN). Composition is skewed to pro residues over residues 654–665 (PPLPPPLPPPLK) and 689–701 (TQPP…PPIQ). Low complexity predominate over residues 702–718 (PTLISNSIYSSTSSVVS). Composition is skewed to pro residues over residues 727 to 758 (PAPP…PPSA), 766 to 795 (PVPP…PPAA), and 802 to 815 (AVPP…PPMV). Low complexity predominate over residues 855–867 (QTSSLVSSLPSSR). Composition is skewed to pro residues over residues 895–906 (SAPPAPPLPPPK) and 921–932 (WPPPPPPGPPPK). The segment covering 933–942 (NSSNSLPSKG) has biased composition (low complexity). The FH2 domain occupies 974–1372 (RPNQSSKRTP…RAQMEAEKEK (399 aa)).

This sequence belongs to the formin-like family. Class-II subfamily.

This Oryza sativa subsp. japonica (Rice) protein is Formin-like protein 7 (FH7).